The primary structure comprises 142 residues: Ribosome-binding factor A (142 aa).

Positions T120 to T142 are disordered. The segment covering E123 to T142 has biased composition (polar residues).

Belongs to the RbfA family. Monomer. Binds 30S ribosomal subunits, but not 50S ribosomal subunits or 70S ribosomes.

It localises to the cytoplasm. One of several proteins that assist in the late maturation steps of the functional core of the 30S ribosomal subunit. Associates with free 30S ribosomal subunits (but not with 30S subunits that are part of 70S ribosomes or polysomes). Required for efficient processing of 16S rRNA. May interact with the 5'-terminal helix region of 16S rRNA. This chain is Ribosome-binding factor A, found in Prochlorococcus marinus (strain MIT 9313).